A 468-amino-acid chain; its full sequence is Hydroxymethylglutaryl-CoA lyase, mitochondrial (468 aa).

The 268-residue stretch at 168–435 (VKIVEVGPRD…HTNVDLGKLI (268 aa)) folds into the Pyruvate carboxyltransferase domain. R176 contributes to the substrate binding site. 3 residues coordinate a divalent metal cation: D177, H368, and H370. Residue C401 is part of the active site. An a divalent metal cation-binding site is contributed by N410.

It belongs to the HMG-CoA lyase family. Homodimer. A divalent metal cation serves as cofactor.

It is found in the mitochondrion matrix. The enzyme catalyses (3S)-3-hydroxy-3-methylglutaryl-CoA = acetoacetate + acetyl-CoA. The protein operates within metabolic intermediate metabolism; (S)-3-hydroxy-3-methylglutaryl-CoA degradation; acetoacetate from (S)-3-hydroxy-3-methylglutaryl-CoA: step 1/1. Involved in the catabolism of branched amino acids such as leucine. This chain is Hydroxymethylglutaryl-CoA lyase, mitochondrial (HMGCL), found in Arabidopsis thaliana (Mouse-ear cress).